The chain runs to 155 residues: Ubiquitin-conjugating enzyme E2 14 (155 aa).

The 148-residue stretch at 7–154 folds into the UBC core domain; the sequence is SSSRRLTKEY…ARDYVEQFAK (148 aa). The Glycyl thioester intermediate role is filled by C91.

Belongs to the ubiquitin-conjugating enzyme family.

It carries out the reaction S-ubiquitinyl-[E1 ubiquitin-activating enzyme]-L-cysteine + [E2 ubiquitin-conjugating enzyme]-L-cysteine = [E1 ubiquitin-activating enzyme]-L-cysteine + S-ubiquitinyl-[E2 ubiquitin-conjugating enzyme]-L-cysteine.. The protein operates within protein modification; protein ubiquitination. Functionally, catalyzes the covalent attachment of ubiquitin to other proteins. Mediates the selective degradation of short-lived and abnormal proteins. This Schizosaccharomyces pombe (strain 972 / ATCC 24843) (Fission yeast) protein is Ubiquitin-conjugating enzyme E2 14 (ubc14).